The sequence spans 202 residues: Tumor necrosis factor alpha-induced protein 8-like protein 3 (202 aa).

The span at 1-10 (MDTDSGDLSE) shows a compositional bias: acidic residues. The segment at 1–24 (MDTDSGDLSEGELSPGPEQFSSKS) is disordered.

It belongs to the TNFAIP8 family.

It localises to the cytoplasm. The protein localises to the cell membrane. In terms of biological role, may act as a lipid transfer protein. This is Tumor necrosis factor alpha-induced protein 8-like protein 3 (tnfaip8l3) from Xenopus laevis (African clawed frog).